The chain runs to 419 residues: Gustatory receptor for bitter taste 93a (419 aa).

At M1–R55 the chain is on the cytoplasmic side. A helical transmembrane segment spans residues F56 to L76. At T77 to D90 the chain is on the extracellular side. A helical transmembrane segment spans residues V91–Q111. Over A112–K145 the chain is Cytoplasmic. A helical membrane pass occupies residues F146–I166. The Extracellular segment spans residues P167–G184. A helical transmembrane segment spans residues F185–L205. At V206 to Q277 the chain is on the cytoplasmic side. Residues I278 to L298 form a helical membrane-spanning segment. At H299–E305 the chain is on the extracellular side. Residues V306–M326 form a helical membrane-spanning segment. Topologically, residues C327 to E383 are cytoplasmic. The chain crosses the membrane as a helical span at residues F384–I404. Over T405–D419 the chain is Extracellular.

Belongs to the insect chemoreceptor superfamily. Gustatory receptor (GR) family. Gr93a subfamily. In larvae, is expressed in neurons of the dorsal pharyngeal sense organs.

The protein localises to the cell membrane. In terms of biological role, gustatory receptor required for response to the bitter in taste neurons. Gr93a cells respond to bitter compounds such as caffeine. Flies avoid bitter substances, suggesting that Gr93a neuron activity is sufficient to mediate avoidance behavior. The chain is Gustatory receptor for bitter taste 93a (Gr93a) from Drosophila melanogaster (Fruit fly).